We begin with the raw amino-acid sequence, 278 residues long: Phage-like element PBSX protein XkdB (278 aa).

A DNA-binding region (H-T-H motif) is located at residues 58–80 (LKAREMAAVFGVSEKTVRRWLEL). Disordered regions lie at residues 117–136 (SLKE…RTDI) and 239–278 (QHER…RKQV). A compositionally biased stretch (basic and acidic residues) spans 248–263 (KTNNRTDFGRAEKRET).

This sequence to B.subtilis YqaL.

The polypeptide is Phage-like element PBSX protein XkdB (xkdB) (Bacillus subtilis (strain 168)).